The primary structure comprises 1438 residues: DNA polymerase III PolC-type (1438 aa).

The region spanning Tyr-422–Phe-578 is the Exonuclease domain.

It belongs to the DNA polymerase type-C family. PolC subfamily.

The protein localises to the cytoplasm. It carries out the reaction DNA(n) + a 2'-deoxyribonucleoside 5'-triphosphate = DNA(n+1) + diphosphate. In terms of biological role, required for replicative DNA synthesis. This DNA polymerase also exhibits 3' to 5' exonuclease activity. This is DNA polymerase III PolC-type from Staphylococcus aureus (strain bovine RF122 / ET3-1).